Reading from the N-terminus, the 414-residue chain is Methyl-CpG-binding domain protein 2 (414 aa).

The segment at 1 to 152 (MRAHPGGGRC…GPRATESGKR (152 aa)) is required for interaction with DHX9 and PRMT5. The interval 1-163 (MRAHPGGGRC…DCPALPPGWK (163 aa)) is disordered. The span at 77–95 (GRGRGRGRGRGRGRGRGRG) shows a compositional bias: basic residues. A compositionally biased stretch (gly residues) spans 98–123 (QSGGSGLGGDGGGGAGGCGGGSGGGV). Residues 148–216 (ESGKRMDCPA…SSFDFRTGKM (69 aa)) enclose the MBD domain. At S184 the chain carries Phosphoserine. The interval 217-244 (MPSKLQKNKQRLRNDPLNQNKGKPDLNT) is disordered. The span at 232 to 244 (PLNQNKGKPDLNT) shows a compositional bias: polar residues. S410 carries the phosphoserine modification.

As to quaternary structure, heterodimer with MBD3 (via N-terminus). Component of the MeCP1 complex that contains HDAC1 and HDAC2. Component of the nucleosome remodeling and deacetylase (NuRD) repressor complex, composed of core proteins MTA1, MTA2, MTA3, RBBP4, RBBP7, HDAC1, HDAC2, MBD2, MBD3, and peripherally associated proteins CDK2AP1, CDK2AP2, GATAD2A, GATAD2B, CHD3, CHD4 and CHD5. The exact stoichiometry of the NuRD complex is unknown, and some subunits such as MBD2 and MBD3, GATAD2A and GATAD2B, and CHD3, CHD4 and CHD5 define mutually exclusive NuRD complexes. Interacts with CDK2AP1. Interacts with DHX9. Interacts with DNMT1. Interacts with GATAD2A/p66-alpha. Interacts with GATAD2B/p66-beta. Interacts with GPN1. Interacts with MIZF. Interacts with PRMT5. Interacts with SIN3A. Interacts with SPHK2. Highly expressed in brain, heart, kidney, lung, skeletal muscle, spleen and testis. Detected at lower levels in embryonic stem cells.

Its subcellular location is the nucleus. The protein resides in the chromosome. In terms of biological role, binds CpG islands in promoters where the DNA is methylated at position 5 of cytosine within CpG dinucleotides. Binds hemimethylated DNA as well. Recruits histone deacetylases and DNA methyltransferases to chromatin. Acts as a component of the histone deacetylase NuRD complex which participates in the remodeling of chromatin. Acts as transcriptional repressor and plays a role in gene silencing. Functions as a scaffold protein, targeting GATAD2A and GATAD2B to chromatin to promote repression. May enhance the activation of some unmethylated cAMP-responsive promoters. Selectively represses transcription activity of methylated rRNA promoters. This chain is Methyl-CpG-binding domain protein 2, found in Mus musculus (Mouse).